A 553-amino-acid chain; its full sequence is Cytochrome P450 86A22 (553 aa).

A helical transmembrane segment spans residues 8-24; that stretch reads MIVAIVAAYLLWFKSIT. Cys459 contacts heme.

Belongs to the cytochrome P450 family. Heme serves as cofactor. Mostly expressed in the developing stigma of floral buds. Weakly detected in leaves, stems and flowers.

Its subcellular location is the membrane. The enzyme catalyses (9Z)-octadecenoyl-CoA + reduced [NADPH--hemoprotein reductase] + O2 = (9Z)-18-hydroxyoctadecenoyl-CoA + oxidized [NADPH--hemoprotein reductase] + H2O + H(+). It carries out the reaction (9Z,12Z)-octadecadienoyl-CoA + reduced [NADPH--hemoprotein reductase] + O2 = (9Z,12Z)-18-hydroxyoctadecadienoyl-CoA + oxidized [NADPH--hemoprotein reductase] + H2O + H(+). In terms of biological role, fatty acyl-CoA omega-hydroxylase essential for the production of omega-hydroxy fatty acids and the biosynthesis of triacylglycerol-/diacylglycerol-based estolide polyesters in the stigma. Substrate preference is 16:0-CoA &gt; 18:1-CoA &gt; 18:0-CoA. The chain is Cytochrome P450 86A22 from Petunia hybrida (Petunia).